A 246-amino-acid chain; its full sequence is C-X-C motif chemokine 16 (246 aa).

Residues 1–26 (MRRGFGPLSLAFFLFLLALLTLPGDG) form the signal peptide. At 27–201 (NQGSVAGSCS…PGAGASTPAW (175 aa)) the chain is on the extracellular side. 2 disulfide bridges follow: cysteine 35-cysteine 65 and cysteine 37-cysteine 79. Disordered stretches follow at residues 104–150 (GKSF…SGAL) and 175–198 (PEAE…GAST). Residues 128–146 (PSDTSTPAHSQSTQHSTLP) are compositionally biased toward polar residues. Basic and acidic residues predominate over residues 175-189 (PEAEANEKQQDDRQQ). A helical transmembrane segment spans residues 202–222 (VPVLSLLAIVFFLTAAMAYVL). Topologically, residues 223-246 (CNRRATQQNSAGLQLWYTPVEPRP) are cytoplasmic.

This sequence belongs to the intercrine alpha (chemokine CxC) family. Glycosylated. As to expression, widely expressed. Not detected in purified B- and T-cells.

It is found in the membrane. Induces a strong chemotactic response. Induces calcium mobilization. Binds to CXCR6/Bonzo. Also acts as a scavenger receptor on macrophages, which specifically binds to OxLDL (oxidized low density lipoprotein), suggesting that it may be involved in pathophysiology such as atherogenesis. This Mus musculus (Mouse) protein is C-X-C motif chemokine 16 (Cxcl16).